Here is a 216-residue protein sequence, read N- to C-terminus: Probable transaldolase (216 aa).

K83 serves as the catalytic Schiff-base intermediate with substrate.

This sequence belongs to the transaldolase family. Type 3B subfamily.

It is found in the cytoplasm. The enzyme catalyses D-sedoheptulose 7-phosphate + D-glyceraldehyde 3-phosphate = D-erythrose 4-phosphate + beta-D-fructose 6-phosphate. Its pathway is carbohydrate degradation; pentose phosphate pathway; D-glyceraldehyde 3-phosphate and beta-D-fructose 6-phosphate from D-ribose 5-phosphate and D-xylulose 5-phosphate (non-oxidative stage): step 2/3. Its function is as follows. Transaldolase is important for the balance of metabolites in the pentose-phosphate pathway. The chain is Probable transaldolase from Caldanaerobacter subterraneus subsp. tengcongensis (strain DSM 15242 / JCM 11007 / NBRC 100824 / MB4) (Thermoanaerobacter tengcongensis).